A 369-amino-acid polypeptide reads, in one-letter code: Homoserine O-succinyltransferase (369 aa).

The important for substrate specificity stretch occupies residues G90–A93. Positions W107 to D353 constitute an AB hydrolase-1 domain. The Nucleophile role is filled by S175. R236 is a substrate binding site. Active-site residues include D316 and H346. D347 is a substrate binding site.

Belongs to the AB hydrolase superfamily. MetX family. As to quaternary structure, homodimer.

The protein resides in the cytoplasm. The enzyme catalyses L-homoserine + succinyl-CoA = O-succinyl-L-homoserine + CoA. Its pathway is amino-acid biosynthesis; L-methionine biosynthesis via de novo pathway; O-succinyl-L-homoserine from L-homoserine: step 1/1. Transfers a succinyl group from succinyl-CoA to L-homoserine, forming succinyl-L-homoserine. The chain is Homoserine O-succinyltransferase from Brevundimonas diminuta (strain ATCC 11568 / DSM 7234 / NBRC 12697 / NCIMB 9393 / NCTC 8545).